Reading from the N-terminus, the 141-residue chain is Hemoglobin subunit alpha (141 aa).

Residues Val1–Arg141 form the Globin domain. Ser3 carries the post-translational modification Phosphoserine. At Lys7 the chain carries N6-succinyllysine. Thr8 bears the Phosphothreonine mark. Residue Lys11 is modified to N6-succinyllysine. Lys16 is subject to N6-acetyllysine; alternate. An N6-succinyllysine; alternate modification is found at Lys16. Tyr24 is modified (phosphotyrosine). Ser35 is subject to Phosphoserine. Lys40 bears the N6-succinyllysine mark. Ser49 bears the Phosphoserine mark. His58 serves as a coordination point for O2. His87 provides a ligand contact to heme b. Position 102 is a phosphoserine (Ser102). Residue Thr108 is modified to Phosphothreonine. A phosphoserine mark is found at Ser124 and Ser131. 2 positions are modified to phosphothreonine: Thr134 and Thr137. The residue at position 138 (Ser138) is a Phosphoserine.

This sequence belongs to the globin family. In terms of assembly, heterotetramer of two alpha chains and two beta chains. In terms of tissue distribution, red blood cells.

Functionally, involved in oxygen transport from the lung to the various peripheral tissues. Its function is as follows. Hemopressin acts as an antagonist peptide of the cannabinoid receptor CNR1. Hemopressin-binding efficiently blocks cannabinoid receptor CNR1 and subsequent signaling. This is Hemoglobin subunit alpha (HBA) from Taphozous georgianus (Sharp-nosed tomb bat).